The following is a 100-amino-acid chain: Defensin-B4 (100 aa).

The N-terminal stretch at 1-22 is a signal peptide; it reads MRASLLLFILLVYLAHAPQAQG. The propeptide occupies 23 to 26; that stretch reads VFGP. Disulfide bonds link Cys-29–Cys-56, Cys-36–Cys-50, and Cys-40–Cys-57. Residues 60–100 are disordered; sequence STGTSSSQGSHEVPVINSEPALESKPEPQDTQEEEATMVSE. Positions 89–100 are enriched in acidic residues; that stretch reads DTQEEEATMVSE.

Belongs to the beta-defensin family. In terms of tissue distribution, highly expressed in kidney, lowly expressed in spleen, and expressed at lower levels in lung.

Its subcellular location is the secreted. Has antimicrobial activity. In Ornithorhynchus anatinus (Duckbill platypus), this protein is Defensin-B4.